Reading from the N-terminus, the 243-residue chain is Small ribosomal subunit protein uS3 (243 aa).

The 72-residue stretch at 39 to 110 (IRVFIQKKYG…QVRINVVEIE (72 aa)) folds into the KH type-2 domain. A disordered region spans residues 216–243 (QPLPVGASPRRKGNRRPQQFEDRSNDGK). Basic and acidic residues predominate over residues 233-243 (QQFEDRSNDGK).

Belongs to the universal ribosomal protein uS3 family. Part of the 30S ribosomal subunit. Forms a tight complex with proteins S10 and S14.

Binds the lower part of the 30S subunit head. Binds mRNA in the 70S ribosome, positioning it for translation. This chain is Small ribosomal subunit protein uS3, found in Prochlorococcus marinus (strain SARG / CCMP1375 / SS120).